An 849-amino-acid chain; its full sequence is Disks large homolog 3 (849 aa).

The segment at 32–101 is disordered; the sequence is DWQVPDPYGP…GKSTPKLNGS (70 aa). A compositionally biased stretch (gly residues) spans 41 to 53; the sequence is PSGGNGASSGYGG. Polar residues predominate over residues 57–69; that stretch reads QTLPSQAGATPTP. 3 consecutive PDZ domains span residues 149-235, 244-330, and 404-484; these read EIVL…VRRR, EVNL…VAKP, and KIIL…AQYR. At Ser157 the chain carries Phosphoserine. The 71-residue stretch at 519–589 folds into the SH3 domain; it reads KRSLYVRALF…PSKKRVEKKE (71 aa). The 176-residue stretch at 659-834 folds into the Guanylate kinase-like domain; sequence ARPVIILGPM…IYNKIKQIIE (176 aa). Tyr705 is subject to Phosphotyrosine.

The protein belongs to the MAGUK family. Interacts through its PDZ domains with NETO1, GRIN2B, SYNGAP1 and APC. Interacts through its first two PDZ domains with ERBB4. Interacts through its third PDZ domain with NLGN1, and probably with NLGN2 and NLGN3. Interacts through its guanylate kinase-like domain with DLGAP1, DLGAP2, DLGAP3 and DLGAP4. Interacts with FRMPD4 (via C-terminus). Interacts with LRFN1, LRFN2 and LRFN4. Interacts with FLTP. Interacts with GPR85. Interacts with DGKI (via PDZ-binding motif).

Functionally, required for learning most likely through its role in synaptic plasticity following NMDA receptor signaling. This is Disks large homolog 3 (Dlg3) from Mus musculus (Mouse).